Reading from the N-terminus, the 582-residue chain is MKRSMYAGRVREEHIGTTITLKGWVSRRRDLGGLIFIDLRDREGVMQLVINPEEVSSDVMATAERLRSEYVIEVEGFVEARQQANDKLATGMVELKVSALTILNTAKTTPFEIKDDAEVSDDTRLRYRYLDLRRPEMLENFKLRAKVTHSIRNYLDDLEFIDVETPMLTKSTPEGARDYLVPSRVSQGHFYALPQSPQITKQLLMNAGFDRYYQIVKCFRDEDLRGDRQPEFTQVDLETSFLSEQEIQDIVEGMIAKVMKETKEIDVTLPFPRMSYDVAMNSYGSDKPDTRFEMLLQDLTVTVKGIDFKVFSEAPAVKAIVVKGNADRYSRKDIDKLTEFAKQFGAKGLAWVKVTDGQFSGPVAKFLTAIETELSSQLKLAENDLVLFVADTLEVANNTLGALRNRIAKDLDMIDQSQFNFLWVVDWPMFEWSEEEGRYMSAHHPFTLPTPESAHELEGDLAKVRAIAYDIVLNGYELGGGSLRINQKEMQERMFKALGFTADEANDQFGFLLEAMDYGFPPHGGLAIGLDRFVMLLAEKDNIREVIAFPKNNKASDPMTQAPSLVSENQLEELSLQIESHD.

Glu174 is a binding site for L-aspartate. The tract at residues 198 to 201 (QITK) is aspartate. Arg220 lines the L-aspartate pocket. ATP contacts are provided by residues 220–222 (RDE) and Gln229. L-aspartate is bound at residue His443. Glu477 serves as a coordination point for ATP. Arg484 lines the L-aspartate pocket. Residue 529-532 (GLDR) participates in ATP binding.

It belongs to the class-II aminoacyl-tRNA synthetase family. Type 1 subfamily. In terms of assembly, homodimer.

The protein resides in the cytoplasm. It catalyses the reaction tRNA(Asp) + L-aspartate + ATP = L-aspartyl-tRNA(Asp) + AMP + diphosphate. In terms of biological role, catalyzes the attachment of L-aspartate to tRNA(Asp) in a two-step reaction: L-aspartate is first activated by ATP to form Asp-AMP and then transferred to the acceptor end of tRNA(Asp). The protein is Aspartate--tRNA ligase of Streptococcus pyogenes serotype M5 (strain Manfredo).